The sequence spans 200 residues: Probable molybdenum cofactor guanylyltransferase (200 aa).

GTP is bound by residues 9-11 (LAG), lysine 21, aspartate 69, and aspartate 100. Mg(2+) is bound at residue aspartate 100.

Belongs to the MobA family. Requires Mg(2+) as cofactor.

The protein resides in the cytoplasm. It carries out the reaction Mo-molybdopterin + GTP + H(+) = Mo-molybdopterin guanine dinucleotide + diphosphate. In terms of biological role, transfers a GMP moiety from GTP to Mo-molybdopterin (Mo-MPT) cofactor (Moco or molybdenum cofactor) to form Mo-molybdopterin guanine dinucleotide (Mo-MGD) cofactor. This is Probable molybdenum cofactor guanylyltransferase from Bacillus mycoides (strain KBAB4) (Bacillus weihenstephanensis).